Reading from the N-terminus, the 945-residue chain is Microtubule cross-linking factor 3 (945 aa).

3 stretches are compositionally biased toward low complexity: residues 1 to 23 (MSQP…AAAT), 72 to 93 (QQQL…TSGT), and 110 to 126 (PKGA…GAEG). Positions 1 to 25 (MSQPPSGGAAPAATSASAAAAATEA) are cleaved as a signal peptide. Disordered stretches follow at residues 1–250 (MSQP…SYWK), 265–293 (KERA…PVAG), 307–366 (SPMA…TLKN), and 494–522 (LSLK…DNED). A compositionally biased stretch (basic and acidic residues) spans 141 to 151 (GQPEEAPREIE). A compositionally biased stretch (gly residues) spans 164-179 (GGVGGGGEGGGAGGGP). The span at 219–235 (TAATSKTPGPGSRNSGS) shows a compositional bias: low complexity. The span at 236-247 (GSTGSGSGGGGS) shows a compositional bias: gly residues. The span at 328-345 (AMQAAAPPSSQPHSQQLQ) shows a compositional bias: low complexity. Positions 340–724 (HSQQLQEQED…GKVMQLQYEN (385 aa)) form a coiled coil. 2 stretches are compositionally biased toward basic and acidic residues: residues 353–366 (EMEK…TLKN) and 494–511 (LSLK…EKKA). At Ser567 the chain carries Phosphoserine. The segment at 741 to 811 (GIRGSPRDSD…PWPKSFSDRQ (71 aa)) is disordered. Residues 745 to 766 (SPRDSDAESDAGKKESDDDSRP) show a composition bias toward basic and acidic residues. Residue Ser779 is modified to Phosphoserine. Residues 809–833 (DRQQMKDIRSEAERLGKTIDRLIAD) are a coiled coil. Residues 913 to 933 (PIILLILILVLFSSLSYTTIF) traverse the membrane as a helical segment.

Belongs to the MTCL family.

It localises to the membrane. This chain is Microtubule cross-linking factor 3 (Mtcl3), found in Mus musculus (Mouse).